Here is a 309-residue protein sequence, read N- to C-terminus: Porphobilinogen deaminase (309 aa).

Cys-244 is subject to S-(dipyrrolylmethanemethyl)cysteine.

This sequence belongs to the HMBS family. Monomer. Dipyrromethane is required as a cofactor.

It carries out the reaction 4 porphobilinogen + H2O = hydroxymethylbilane + 4 NH4(+). Its pathway is porphyrin-containing compound metabolism; protoporphyrin-IX biosynthesis; coproporphyrinogen-III from 5-aminolevulinate: step 2/4. In terms of biological role, tetrapolymerization of the monopyrrole PBG into the hydroxymethylbilane pre-uroporphyrinogen in several discrete steps. This is Porphobilinogen deaminase from Agrobacterium fabrum (strain C58 / ATCC 33970) (Agrobacterium tumefaciens (strain C58)).